A 398-amino-acid chain; its full sequence is MRSTTLLALLALVLLYLVSGALVFQALEQPHEQQAQKKMDHGRDQFLRDHPCVSQKSLEDFIKLLVEALGGGANPETSWTNSSNHSSAWNLGSAFFFSGTIITTIGYGNIVLHTDAGRLFCIFYALVGIPLFGMLLAGVGDRLGSSLRRGIGHIEAIFLKWHVPPGLVRSLSAVLFLLIGCLLFVLTPTFVFSYMESWSKLEAIYFVIVTLTTVGFGDYVPGDGTGQNSPAYQPLVWFWILFGLAYFASVLTTIGNWLRAVSRRTRAEMGGLTAQAASWTGTVTARVTQRTGPSAPPPEKEQPLLPSSLPAPPAVVEPAGRPGSPAPAEKVETPSPPTASALDYPSENLAFIDESSDTQSERGCALPRAPRGRRRPNPSKKPSRPRGPGRLRDKAVPV.

At 1–3 (MRS) the chain is on the cytoplasmic side. Residues 4–24 (TTLLALLALVLLYLVSGALVF) form a helical membrane-spanning segment. At 25 to 88 (QALEQPHEQQ…WTNSSNHSSA (64 aa)) the chain is on the extracellular side. 2 N-linked (GlcNAc...) asparagine glycosylation sites follow: Asn81 and Asn84. The segment at residues 89 to 103 (WNLGSAFFFSGTIIT) is an intramembrane region (helical). Positions 104, 105, 106, and 107 each coordinate K(+). Positions 104–109 (TIGYGN) are selectivity filter 1. An intramembrane segment occupies 104-110 (TIGYGNI). At 111-118 (VLHTDAGR) the chain is on the extracellular side. Residues 119 to 151 (LFCIFYALVGIPLFGMLLAGVGDRLGSSLRRGI) form a helical membrane-spanning segment. Residues 152-173 (GHIEAIFLKWHVPPGLVRSLSA) are Cytoplasmic-facing. A helical transmembrane segment spans residues 174–195 (VLFLLIGCLLFVLTPTFVFSYM). Topologically, residues 196–200 (ESWSK) are extracellular. Positions 201–214 (LEAIYFVIVTLTTV) form an intramembrane region, helical. K(+)-binding residues include Thr213, Val214, Gly215, and Phe216. The selectivity filter 2 stretch occupies residues 213 to 218 (TVGFGD). Residues 215 to 220 (GFGDYV) lie within the membrane without spanning it. Residues 221–234 (PGDGTGQNSPAYQP) lie on the Extracellular side of the membrane. The chain crosses the membrane as a helical span at residues 235 to 261 (LVWFWILFGLAYFASVLTTIGNWLRAV). Residues 262-398 (SRRTRAEMGG…GRLRDKAVPV (137 aa)) lie on the Cytoplasmic side of the membrane. Residues 282-292 (TVTARVTQRTG) are compositionally biased toward polar residues. The segment at 282-398 (TVTARVTQRT…GRLRDKAVPV (117 aa)) is disordered. Residues 370–389 (PRGRRRPNPSKKPSRPRGPG) show a composition bias toward basic residues.

It belongs to the two pore domain potassium channel (TC 1.A.1.8) family. As to quaternary structure, homodimer; disulfide-linked. Forms heterodimers with other 2-pore domain K(+) channel subunits, such as KCNK2 and KCNK10. Post-translationally, N-glycosylated. In terms of tissue distribution, expressed in brain, spinal cord and eye. Not detected in heart, skeletal muscle, liver, lungs, kidney and testis.

The protein localises to the cell membrane. Its subcellular location is the cell projection. It is found in the axon. The catalysed reaction is K(+)(in) = K(+)(out). It carries out the reaction Rb(+)(in) = Rb(+)(out). The enzyme catalyses Cs(+)(in) = Cs(+)(out). Activated by arachidonic acid and other polyunsaturated fatty acids. Not affected by volatile general anesthetics such as chloroform, diethyl ether, halothane and isoflurane. Activated at intracellular and extracellular basic pHs. K(+) channel that conducts voltage-dependent outward rectifying currents upon membrane depolarization. Voltage sensing is coupled to K(+) electrochemical gradient in an 'ion flux gating' mode where outward but not inward ion flow opens the gate. Converts to voltage-independent 'leak' conductance mode upon stimulation by various stimuli including mechanical membrane stretch, basic pH, temperature and lipids. Homo- and heterodimerizes to form functional channels with distinct regulatory and gating properties. At trigeminal A-beta afferent nerves, the heterodimer of KCNK2/TREK-1 and KCNK4/TRAAK is mostly coexpressed at nodes of Ranvier where it conducts voltage-independent mechanosensitive and thermosensitive currents, allowing rapid action potential repolarization, high speed and high frequence saltatory conduction on myelinated nerves to ensure prompt sensory responses. Permeable to other monovalent cations such as Rb(+) and Cs(+). The protein is Potassium channel subfamily K member 4 of Mus musculus (Mouse).